The chain runs to 118 residues: Small ribosomal subunit protein uS13 (118 aa).

The interval 92–118 is disordered; that stretch reads RRGLPVRGQRTKTNARTRKGPRKPIKK.

This sequence belongs to the universal ribosomal protein uS13 family. Part of the 30S ribosomal subunit. Forms a loose heterodimer with protein S19. Forms two bridges to the 50S subunit in the 70S ribosome.

In terms of biological role, located at the top of the head of the 30S subunit, it contacts several helices of the 16S rRNA. In the 70S ribosome it contacts the 23S rRNA (bridge B1a) and protein L5 of the 50S subunit (bridge B1b), connecting the 2 subunits; these bridges are implicated in subunit movement. Contacts the tRNAs in the A and P-sites. The sequence is that of Small ribosomal subunit protein uS13 from Yersinia enterocolitica serotype O:8 / biotype 1B (strain NCTC 13174 / 8081).